The chain runs to 286 residues: Phosphate import ATP-binding protein PstB (286 aa).

An ABC transporter domain is found at 40–281 (VVAKDFSIFY…PRDRMTEDYI (242 aa)). 72-79 (GPSGCGKS) contributes to the ATP binding site.

The protein belongs to the ABC transporter superfamily. Phosphate importer (TC 3.A.1.7) family. The complex is composed of two ATP-binding proteins (PstB), two transmembrane proteins (PstC and PstA) and a solute-binding protein (PstS).

The protein localises to the cell inner membrane. The catalysed reaction is phosphate(out) + ATP + H2O = ADP + 2 phosphate(in) + H(+). In terms of biological role, part of the ABC transporter complex PstSACB involved in phosphate import. Responsible for energy coupling to the transport system. The protein is Phosphate import ATP-binding protein PstB of Chlorobium luteolum (strain DSM 273 / BCRC 81028 / 2530) (Pelodictyon luteolum).